The primary structure comprises 471 residues: GDP-fucose protein O-fucosyltransferase 3 (471 aa).

Over 1–8 (MNRMWEKK) the chain is Cytoplasmic. The helical; Signal-anchor for type II membrane protein transmembrane segment at 9-29 (FWISCFFIILFFILVTLQVMV) threads the bilayer. Over 30–471 (ELGRFEKRET…EFWNLVFKFQ (442 aa)) the chain is Lumenal. Residues Asn102, Asn122, Asn160, and Asn310 are each glycosylated (N-linked (GlcNAc...) asparagine). An intrachain disulfide couples Cys381 to Cys384. Asn457 carries N-linked (GlcNAc...) asparagine glycosylation.

It belongs to the glycosyltransferase 10 family.

The protein localises to the endoplasmic reticulum membrane. It catalyses the reaction L-threonyl-[protein] + GDP-beta-L-fucose = 3-O-(alpha-L-fucosyl)-L-threonyl-[protein] + GDP + H(+). The enzyme catalyses L-seryl-[protein] + GDP-beta-L-fucose = 3-O-(alpha-L-fucosyl)-L-seryl-[protein] + GDP + H(+). Its pathway is protein modification; protein glycosylation. Protein O-fucosyltransferase that specifically catalyzes O-fucosylation of serine or threonine residues in EMI domains of target proteins. Attaches fucose through an O-glycosidic linkage. O-fucosylation of EMI domain-containing proteins may be required for facilitating protein folding and secretion. The sequence is that of GDP-fucose protein O-fucosyltransferase 3 (fut10) from Xenopus tropicalis (Western clawed frog).